The chain runs to 305 residues: MASRQPEVPALEASAPLGKMSLPIGIYRRAVSYDDTLEDPAPMTPPPSDMGSVPWKPVIPERKYQHLAKVEEGEASLPSPAMTLSSAIDSVDKVPVVKAKATHVIMNSLITKQTQESIQHFERQAGLRDAGYTPHKGLTTEETKYLRVAEALHKLKLQSGEVTKEERQPASAQSTPSTTPHSSPKQRPRGWFTSGSSTALPGPNPSTMDSGSGDKDRNLSDKWSLFGPRSLQKYDSGSFATQAYRGAQKPSPLELIRAQANRMAEDPAALKPPKMDIPVMEGKKQPPRAHNLKPRDLNVLTPTGF.

The interval 37–56 is disordered; sequence LEDPAPMTPPPSDMGSVPWK. Position 44 is a phosphothreonine (Thr-44). The Flavin-containing monooxygenase motif motif lies at 67 to 77; sequence LAKVEEGEASL. 2 disordered regions span residues 158-236 and 259-305; these read QSGE…KYDS and QANR…PTGF. Residues 169–183 are compositionally biased toward low complexity; the sequence is PASAQSTPSTTPHSS. Thr-175 carries the post-translational modification Phosphothreonine. 2 positions are modified to phosphoserine: Ser-182 and Ser-183. Residues 193-210 show a composition bias toward polar residues; it reads TSGSSTALPGPNPSTMDS.

This sequence belongs to the P33MONOX family. Interacts with NELFB, NOL12 and PRNP. Down-regulated in the occipital lobe of an early stage Alzheimer disease patients.

It is found in the cytoplasm. Its function is as follows. Potential NADPH-dependent oxidoreductase. May be involved in the regulation of neuronal survival, differentiation and axonal outgrowth. The chain is Putative monooxygenase p33MONOX (KIAA1191) from Homo sapiens (Human).